Reading from the N-terminus, the 749-residue chain is MAGCIPEEKTYRRFLELFLGEFRGPCGGGEPEPEPESEPEPEPEAELVAAEAAEASGEEPGEDAATVEATEEGEQDQDPEPEDEAVEEETATEGEEEEEEEAAAPGHSAVPPPPQPQLPPLPPLPRPLSERITREEVEGESLDLCLQQLYKYNCPSFLAAALARATSDEVLQSDLSAHCIPKETDGTEGTVEIETVKLARSVFSKLHEICCSWVKDFPLRRRPQIYYETSIHAIKNMRRKMEDKHVCIPDFNMLFNLEDQEEQAYFAVFDGHGGVDAAIYASVHLHVNLVRQEMFPHDPAEALCRAFRVTDERFVQKAARESLRCGTTGVVTFIRGNMLHVAWVGDSQVMLVRKGQAVELMKPHKPDREDEKQRIEALGGCVVWFGAWRVNGSLSVSRAIGDAEHKPYICGDADSASTVLDGTEDYLILACDGFYDTVNPDEAVKVVSDHLKENNGDSSMVAHKLVASARDAGSSDNITVIVVFLRDMNKAVNVSEESEWTENSFQGGQEDGGDDKETHGECKRPWPQHQCSAPADLGYEGRVDSFTDRTSLSPGPQINVLEDPDYLDLTQIEASKPHSTQFLPPVEMIGPGAPKKDLNELIMEERSVKSSLPERSGAGEPRVSFNLGSTGQQICRMENLSPVSSGLENEQFKSRGKTASRLYHLRHHYSKRQRGFRFNPKFYSFLSAREPSHKIGISLSSLTRSGKRNKMLRSSLPWRENSWEGYSGNVKIRKRNDIPCPDFPWSYKI.

Positions 21–128 (EFRGPCGGGE…PPLPPLPRPL (108 aa)) are disordered. Tandem repeats lie at residues 31 to 32 (PE), 33 to 34 (PE), and 35 to 36 (PE). Residues 31 to 44 (PEPEPESEPEPEPE) are 7 X 2 AA tandem repeats of P-E. The span at 31-45 (PEPEPESEPEPEPEA) shows a compositional bias: acidic residues. The 4; approximate repeat unit spans residues 37 to 38 (SE). 3 repeat units span residues 39–40 (PE), 41–42 (PE), and 43–44 (PE). Positions 46–55 (ELVAAEAAEA) are enriched in low complexity. Over residues 69-102 (ATEEGEQDQDPEPEDEAVEEETATEGEEEEEEEA) the composition is skewed to acidic residues. The span at 110–126 (VPPPPQPQLPPLPPLPR) shows a compositional bias: pro residues. The region spanning 224–485 (QIYYETSIHA…DNITVIVVFL (262 aa)) is the PPM-type phosphatase domain. Residues aspartate 270, glycine 271, aspartate 432, and aspartate 476 each contribute to the Mn(2+) site. The segment at 495 to 537 (SEESEWTENSFQGGQEDGGDDKETHGECKRPWPQHQCSAPADL) is disordered. Residues 515 to 524 (DKETHGECKR) are compositionally biased toward basic and acidic residues. Phosphoserine occurs at positions 532 and 545. Positions 608 to 627 (VKSSLPERSGAGEPRVSFNL) are disordered.

It belongs to the PP2C family. In terms of assembly, heterotrimer. Interacts with PAX1 and ARHGEF6 (or ARHGEF7). Requires Mg(2+) as cofactor. Mn(2+) is required as a cofactor.

The protein localises to the nucleus. It is found in the cytoplasm. The catalysed reaction is O-phospho-L-seryl-[protein] + H2O = L-seryl-[protein] + phosphate. It carries out the reaction O-phospho-L-threonyl-[protein] + H2O = L-threonyl-[protein] + phosphate. Functionally, protein phosphatase that inactivates multifunctional CaM kinases such as CAMK4 and CAMK2. Dephosphorylates and inactivates PAK. May play a role in the inhibition of actin fiber stress breakdown and in morphological changes driven by TNK2/CDC42. Dephosphorylates PRKAA2. The chain is Protein phosphatase 1E (Ppm1e) from Mus musculus (Mouse).